The primary structure comprises 92 residues: MEFLLKLEDLLRKRKEELPEKSYTAELFRDGVDRILKKIGEEAGEVIIAAKNPNEKELIHEIADLIFHLEVLMVEKGISLTTIAKELEKRHS.

Belongs to the PRA-PH family.

It is found in the cytoplasm. The catalysed reaction is 1-(5-phospho-beta-D-ribosyl)-ATP + H2O = 1-(5-phospho-beta-D-ribosyl)-5'-AMP + diphosphate + H(+). It functions in the pathway amino-acid biosynthesis; L-histidine biosynthesis; L-histidine from 5-phospho-alpha-D-ribose 1-diphosphate: step 2/9. The polypeptide is Phosphoribosyl-ATP pyrophosphatase (Leptospira biflexa serovar Patoc (strain Patoc 1 / ATCC 23582 / Paris)).